Consider the following 254-residue polypeptide: Gamma-glutamyl-gamma-aminobutyrate hydrolase (254 aa).

The region spanning 16-250 (RNRLKGHATQ…ITACQHHIAE (235 aa)) is the Glutamine amidotransferase type-1 domain. C114 (nucleophile) is an active-site residue. Catalysis depends on residues H222 and E224.

Belongs to the peptidase C26 family.

It carries out the reaction 4-(gamma-L-glutamylamino)butanoate + H2O = 4-aminobutanoate + L-glutamate. Its pathway is amine and polyamine degradation; putrescine degradation; 4-aminobutanoate from putrescine: step 4/4. Involved in the breakdown of putrescine via hydrolysis of the gamma-glutamyl linkage of gamma-glutamyl-gamma-aminobutyrate. The polypeptide is Gamma-glutamyl-gamma-aminobutyrate hydrolase (puuD) (Escherichia coli O157:H7).